The following is a 282-amino-acid chain: tRNA (guanine-N(1)-)-methyltransferase (282 aa).

Residue 145-150 (IGDYVL) coordinates S-adenosyl-L-methionine.

It belongs to the RNA methyltransferase TrmD family. Homodimer.

The protein resides in the cytoplasm. The enzyme catalyses guanosine(37) in tRNA + S-adenosyl-L-methionine = N(1)-methylguanosine(37) in tRNA + S-adenosyl-L-homocysteine + H(+). In terms of biological role, specifically methylates guanosine-37 in various tRNAs. The sequence is that of tRNA (guanine-N(1)-)-methyltransferase from Streptomyces avermitilis (strain ATCC 31267 / DSM 46492 / JCM 5070 / NBRC 14893 / NCIMB 12804 / NRRL 8165 / MA-4680).